A 306-amino-acid chain; its full sequence is Agmatinase (306 aa).

6 residues coordinate Mn(2+): H126, D149, H151, D153, D230, and D232.

The protein belongs to the arginase family. Agmatinase subfamily. Requires Mn(2+) as cofactor.

The catalysed reaction is agmatine + H2O = urea + putrescine. It functions in the pathway amine and polyamine biosynthesis; putrescine biosynthesis via agmatine pathway; putrescine from agmatine: step 1/1. Functionally, catalyzes the formation of putrescine from agmatine. The sequence is that of Agmatinase from Citrobacter koseri (strain ATCC BAA-895 / CDC 4225-83 / SGSC4696).